The chain runs to 1503 residues: Protein Skeletor, isoforms D/E (1503 aa).

Positions 1-28 (MLAMKDKPWLLLFGLLAALSCLASFGDA) are cleaved as a signal peptide. DM13 domains lie at 34–143 (GTKI…VSIP) and 151–258 (PQKI…VRLP). The DOMON domain maps to 287–419 (LAFEVRWAVA…GAESVVWAIG (133 aa)). Disordered stretches follow at residues 451-491 (PLPE…NVEP), 830-857 (NPNL…PTEI), 1086-1106 (IFNQ…SSVS), and 1426-1503 (EFRG…GRRA). Residues 830–840 (NPNLNPNHPNQ) show a composition bias toward low complexity. Positions 1452-1491 (SSSSGSTIYPYSSSTGASTSTVSSSASSPLSSSSLRPIST) are enriched in low complexity.

Interacts with Chro and Mgtor as part of a macromolecular complex forming the spindle matrix. Chro colocalizes with Skeletor (Skel) on the chromosomes at interphase and on spindle during metaphase.

The protein resides in the cytoplasm. It is found in the cytoskeleton. Its subcellular location is the spindle. It localises to the nucleus. The protein localises to the nucleolus. The protein resides in the chromosome. Provides structural support to stabilize and organize the microtubule spindle during mitosis (within embryonic somatic cells) and meiosis (within spermatocytes). The role in mitosis regulation depends on the Ran pathway. The chain is Protein Skeletor, isoforms D/E from Drosophila melanogaster (Fruit fly).